The sequence spans 163 residues: Nucleotide-binding protein BBR47_25280 (163 aa).

This sequence belongs to the YajQ family.

Nucleotide-binding protein. This chain is Nucleotide-binding protein BBR47_25280, found in Brevibacillus brevis (strain 47 / JCM 6285 / NBRC 100599).